Here is a 500-residue protein sequence, read N- to C-terminus: Glutamyl-tRNA(Gln) amidotransferase subunit A (500 aa).

Catalysis depends on charge relay system residues K81 and S161. S185 serves as the catalytic Acyl-ester intermediate.

This sequence belongs to the amidase family. GatA subfamily. In terms of assembly, heterotrimer of A, B and C subunits.

The enzyme catalyses L-glutamyl-tRNA(Gln) + L-glutamine + ATP + H2O = L-glutaminyl-tRNA(Gln) + L-glutamate + ADP + phosphate + H(+). Allows the formation of correctly charged Gln-tRNA(Gln) through the transamidation of misacylated Glu-tRNA(Gln) in organisms which lack glutaminyl-tRNA synthetase. The reaction takes place in the presence of glutamine and ATP through an activated gamma-phospho-Glu-tRNA(Gln). In Rhodospirillum rubrum (strain ATCC 11170 / ATH 1.1.1 / DSM 467 / LMG 4362 / NCIMB 8255 / S1), this protein is Glutamyl-tRNA(Gln) amidotransferase subunit A.